The following is a 338-amino-acid chain: uncharacterized protein (338 aa).

The TNase-like domain maps to 144–321 (HTLPVDVKAV…RAARVGLWAS (178 aa)). Catalysis depends on residues arginine 228, glutamate 236, and arginine 270.

This is an uncharacterized protein from Capnoides sempervirens (Rock-harlequin).